Consider the following 118-residue polypeptide: Small ribosomal subunit protein uS13 (118 aa).

Residues 94 to 118 (SLPLRGQRTKTNARTRKGPRKPIKK) form a disordered region.

This sequence belongs to the universal ribosomal protein uS13 family. As to quaternary structure, part of the 30S ribosomal subunit. Forms a loose heterodimer with protein S19. Forms two bridges to the 50S subunit in the 70S ribosome.

In terms of biological role, located at the top of the head of the 30S subunit, it contacts several helices of the 16S rRNA. In the 70S ribosome it contacts the 23S rRNA (bridge B1a) and protein L5 of the 50S subunit (bridge B1b), connecting the 2 subunits; these bridges are implicated in subunit movement. Contacts the tRNAs in the A and P-sites. The chain is Small ribosomal subunit protein uS13 from Shewanella oneidensis (strain ATCC 700550 / JCM 31522 / CIP 106686 / LMG 19005 / NCIMB 14063 / MR-1).